The primary structure comprises 415 residues: Protrudin (415 aa).

The segment at 1-24 (MQTSDRDLSGPEASPSGMPEVLSE) is disordered. Topologically, residues 1–66 (MQTSDRDLSG…AGDGVRYLLR (66 aa)) are cytoplasmic. A sufficient for homooligomerization region spans residues 1–92 (MQTSDRDLSG…LFLTLNEGAW (92 aa)). The sufficient for localization to endoplasmic reticulum tubular network and for interactions with REEP1, REEP5, ATL1, ATL2, ATL3 and SPAST stretch occupies residues 1 to 210 (MQTSDRDLSG…LYLLPLCWVL (210 aa)). The tract at residues 51-64 (LEPLKDAGDGVRYL) is necessary for interaction with RAB11A and function in neurite outgrowth. A helical membrane pass occupies residues 67 to 87 (WQMPLCSLLTCLGLNILFLTL). Residue asparagine 88 is a topological domain, lumenal. A helical membrane pass occupies residues 89–109 (EGAWYSMGALMISVPALLGYL). Topologically, residues 110–192 (QEVCRGQLPE…NPVVSSQFYG (83 aa)) are cytoplasmic. Positions 193-213 (ALLGMVCMLYLLPLCWVLALL) form an intramembrane region, helical. The Cytoplasmic segment spans residues 214 to 415 (NSTLFLGNGD…CASCNQTLSK (202 aa)). Residues 254-290 (QGAGGRGLLDSSPAPTPTEDLTPGSVEEAEEAEPDEE) are disordered. Positions 275–365 (TPGSVEEAEE…GCAATFSVLK (91 aa)) are necessary for interaction with KIF5A. Residues 280–290 (EEAEEAEPDEE) are compositionally biased toward acidic residues. The necessary for interaction with VAPA stretch occupies residues 290–296 (EFKDAIE). The segment at 348–414 (TNNFGNCAGC…VCASCNQTLS (67 aa)) adopts an FYVE-type zinc-finger fold. Residues cysteine 354, cysteine 357, cysteine 370, cysteine 373, cysteine 378, cysteine 381, cysteine 406, and cysteine 409 each contribute to the Zn(2+) site.

Can form homooligomers (monomers, dimers and tetramers). Interacts with RAB11A (GDP-bound form); regulates RAB11A. Interacts with FKBP8; may negatively regulate ZFYVE27 phosphorylation. Isoform 1 interacts to a greater extent than isoform 2 with VAPB (via MSP domain). Isoform 1 interacts to a greater extent than isoform 2 with VAPA (via MSP domain). Interaction with VAPA may regulate ZFYVE27 retention in the endoplasmic reticulum and its function in cell projections formation. Interacts with ATL2, ATL3, SPAST and RTN3. Interacts with REEP1, REEP5 and ATL1. Interacts with RAB11B (GDP-bound form), SURF4, KIF5B and KIF5C. Isoform 1 and 2 interact with KIFA. Phosphorylated. Phosphorylation is induced by NGF through the MAPK/ERK pathway and modulates interaction with RAB11A. In terms of tissue distribution, astrocytes express both isoform 1 and isoform 2 and oligodendrocytes express only isoform 2 (at protein level). Isoform 1 is expressed specifically in the central nervous system and selectively in neuronal cells. Isoform 2 is expressed in cerebrum, cerebellum, spinal cord, heart, thymus, spleen, intestine and lung.

It localises to the recycling endosome membrane. The protein localises to the endoplasmic reticulum membrane. It is found in the cell projection. Its subcellular location is the growth cone membrane. Functionally, key regulator of RAB11-dependent vesicular trafficking during neurite extension through polarized membrane transport. Promotes axonal elongation and contributes to the establishment of neuronal cell polarity. Involved in nerve growth factor-induced neurite formation in VAPA-dependent manner. Contributes to both the formation and stabilization of the tubular ER network. Involved in ER morphogenesis by regulating the sheet-to-tubule balance and possibly the density of tubule interconnections. Acts as an adapter protein that facilitates the interaction of KIF5A with VAPA, VAPB, SURF4, RAB11A, RAB11B and RTN3 and the ZFYVE27-KIF5A complex contributes to the transport of these proteins in neurons. Can induce formation of neurite-like membrane protrusions in non-neuronal cells in a KIF5A/B-dependent manner. This Mus musculus (Mouse) protein is Protrudin (Zfyve27).